The sequence spans 215 residues: UPF0502 protein YceH (215 aa).

The residue at position 80 (lysine 80) is an N6-acetyllysine.

The protein belongs to the UPF0502 family.

The protein is UPF0502 protein YceH of Shigella flexneri serotype 5b (strain 8401).